A 464-amino-acid polypeptide reads, in one-letter code: UDP-N-acetylmuramoylalanine--D-glutamate ligase (464 aa).

127 to 133 serves as a coordination point for ATP; sequence GSNGKST.

The protein belongs to the MurCDEF family.

It is found in the cytoplasm. The catalysed reaction is UDP-N-acetyl-alpha-D-muramoyl-L-alanine + D-glutamate + ATP = UDP-N-acetyl-alpha-D-muramoyl-L-alanyl-D-glutamate + ADP + phosphate + H(+). It participates in cell wall biogenesis; peptidoglycan biosynthesis. Cell wall formation. Catalyzes the addition of glutamate to the nucleotide precursor UDP-N-acetylmuramoyl-L-alanine (UMA). This Dinoroseobacter shibae (strain DSM 16493 / NCIMB 14021 / DFL 12) protein is UDP-N-acetylmuramoylalanine--D-glutamate ligase.